A 408-amino-acid chain; its full sequence is Tryptophan synthase beta chain (408 aa).

N6-(pyridoxal phosphate)lysine is present on Lys-103.

Belongs to the TrpB family. Tetramer of two alpha and two beta chains. Requires pyridoxal 5'-phosphate as cofactor.

It catalyses the reaction (1S,2R)-1-C-(indol-3-yl)glycerol 3-phosphate + L-serine = D-glyceraldehyde 3-phosphate + L-tryptophan + H2O. The protein operates within amino-acid biosynthesis; L-tryptophan biosynthesis; L-tryptophan from chorismate: step 5/5. Its function is as follows. The beta subunit is responsible for the synthesis of L-tryptophan from indole and L-serine. The polypeptide is Tryptophan synthase beta chain (Koribacter versatilis (strain Ellin345)).